A 248-amino-acid chain; its full sequence is tRNA uridine(34) hydroxylase (248 aa).

Residues 127-221 form the Rhodanese domain; the sequence is RGRPLVLLDT…YFEEVGGEGY (95 aa). Residue Cys181 is the Cysteine persulfide intermediate of the active site.

The protein belongs to the TrhO family.

The catalysed reaction is uridine(34) in tRNA + AH2 + O2 = 5-hydroxyuridine(34) in tRNA + A + H2O. In terms of biological role, catalyzes oxygen-dependent 5-hydroxyuridine (ho5U) modification at position 34 in tRNAs. In Xanthomonas axonopodis pv. citri (strain 306), this protein is tRNA uridine(34) hydroxylase.